The primary structure comprises 116 residues: Ribosome-binding factor A (116 aa).

It belongs to the RbfA family. As to quaternary structure, monomer. Binds 30S ribosomal subunits, but not 50S ribosomal subunits or 70S ribosomes.

The protein localises to the cytoplasm. In terms of biological role, one of several proteins that assist in the late maturation steps of the functional core of the 30S ribosomal subunit. Associates with free 30S ribosomal subunits (but not with 30S subunits that are part of 70S ribosomes or polysomes). Required for efficient processing of 16S rRNA. May interact with the 5'-terminal helix region of 16S rRNA. This is Ribosome-binding factor A from Clostridium botulinum (strain Alaska E43 / Type E3).